A 580-amino-acid chain; its full sequence is MSKKKMAITLSAMLSATIIPSFTMDVHAEKKEETKNTKIELENGMTKPIYSLDEAIMDENLYVETEVDSDQDGKKDRVSIKVMRPKTDPNVKVPVIYEMSPYRSGLKDVPVYNVDEELYAYEGKPYGAINLGSYGNYYVPRGYAVILGESIGTGKSDGCPTTGDEQEILGTKSVIDWVNGRAKAFTEQGEEVQANWSTGNVGMTGVSYNGTLPNAVATTGVEGLKTIIPIAAISSWYDYYRANGAVIAPGGYQGEDTDNMAEAVLTRENPEVCGQVIKELTAGQDRKTGNYNDFWDKRNYVKDAKNVKASVFVVHGLNDWNVKTKQFAQWWEALGENNVPRKMWLHQGGHGGTSSNNWQQTQNKWLDYWLYGIENGIMDEPMVDVQRENKTWQKIKNWPDPAAVPSKIRMYLSNKSVNLPLSMGSANKVFSFLDDAQIKSNQLVANPELEVANRLVYTMPVLQKDTRISGTPKISITGNIDRSVSNLTALLVDYGGAKPEIVTRGWMDPQNVKSIENSTAIQPGKDYTFTWDMQPDDYVFKAGHQIGVVLIASDYDYTIRPKAGTKLTVKLSEVTLPIVK.

Catalysis depends on charge relay system residues Ser207, Asp319, and His350.

The protein belongs to the peptidase S15 family.

It carries out the reaction Hydrolyzes Xaa-Pro-|- bonds to release unblocked, N-terminal dipeptides from substrates including Ala-Pro-|-p-nitroanilide and (sequentially) Tyr-Pro-|-Phe-Pro-|-Gly-Pro-|-Ile.. This Bacillus cereus (strain ATCC 14579 / DSM 31 / CCUG 7414 / JCM 2152 / NBRC 15305 / NCIMB 9373 / NCTC 2599 / NRRL B-3711) protein is Putative Xaa-Pro dipeptidyl-peptidase.